An 86-amino-acid polypeptide reads, in one-letter code: Large ribosomal subunit protein bL27 (86 aa).

The tract at residues 1–24 (MATKKAGGSSRNGRDSAGRRLGVK) is disordered.

Belongs to the bacterial ribosomal protein bL27 family.

The protein is Large ribosomal subunit protein bL27 of Rickettsia felis (strain ATCC VR-1525 / URRWXCal2) (Rickettsia azadi).